The sequence spans 205 residues: Glycerol-3-phosphate acyltransferase (205 aa).

The next 5 membrane-spanning stretches (helical) occupy residues 3 to 23 (VFAL…SAIL), 53 to 73 (GVAA…VWLA), 80 to 100 (PFYL…PVFF), 112 to 132 (LGAI…TWLL), and 138 to 158 (GYSS…VWWF).

This sequence belongs to the PlsY family. Probably interacts with PlsX.

Its subcellular location is the cell inner membrane. It catalyses the reaction an acyl phosphate + sn-glycerol 3-phosphate = a 1-acyl-sn-glycero-3-phosphate + phosphate. Its pathway is lipid metabolism; phospholipid metabolism. In terms of biological role, catalyzes the transfer of an acyl group from acyl-phosphate (acyl-PO(4)) to glycerol-3-phosphate (G3P) to form lysophosphatidic acid (LPA). This enzyme utilizes acyl-phosphate as fatty acyl donor, but not acyl-CoA or acyl-ACP. The chain is Glycerol-3-phosphate acyltransferase from Erwinia tasmaniensis (strain DSM 17950 / CFBP 7177 / CIP 109463 / NCPPB 4357 / Et1/99).